The following is a 326-amino-acid chain: Malate dehydrogenase (326 aa).

Residue 12–18 (GGTGQIA) coordinates NAD(+). 2 residues coordinate substrate: Arg-93 and Arg-99. NAD(+) contacts are provided by residues Asn-106, Gln-113, and 130–132 (VGN). Substrate contacts are provided by Asn-132 and Arg-163. His-188 functions as the Proton acceptor in the catalytic mechanism.

The protein belongs to the LDH/MDH superfamily. MDH type 2 family.

It catalyses the reaction (S)-malate + NAD(+) = oxaloacetate + NADH + H(+). Catalyzes the reversible oxidation of malate to oxaloacetate. In Chlamydia trachomatis serovar A (strain ATCC VR-571B / DSM 19440 / HAR-13), this protein is Malate dehydrogenase.